Consider the following 932-residue polypeptide: Protein translocase subunit SecA (932 aa).

ATP contacts are provided by residues Gln-90, 108-112, and Asp-498; that span reads GEGKT.

It belongs to the SecA family. As to quaternary structure, monomer and homodimer. Part of the essential Sec protein translocation apparatus which comprises SecA, SecYEG and auxiliary proteins SecDF. Other proteins may also be involved.

It localises to the cell inner membrane. The protein localises to the cellular thylakoid membrane. Its subcellular location is the cytoplasm. The enzyme catalyses ATP + H2O + cellular proteinSide 1 = ADP + phosphate + cellular proteinSide 2.. Its function is as follows. Part of the Sec protein translocase complex. Interacts with the SecYEG preprotein conducting channel. Has a central role in coupling the hydrolysis of ATP to the transfer of proteins into and across the cell membrane, serving as an ATP-driven molecular motor driving the stepwise translocation of polypeptide chains across the membrane. Probably participates in protein translocation into and across both the cytoplasmic and thylakoid membranes in cyanobacterial cells. The chain is Protein translocase subunit SecA from Synechocystis sp. (strain ATCC 27184 / PCC 6803 / Kazusa).